An 860-amino-acid chain; its full sequence is Beta-glucosidase A (860 aa).

The signal sequence occupies residues 1–19 (MRFTLIEAVALTAVSLASA). N-linked (GlcNAc...) asparagine glycosylation is found at asparagine 61, asparagine 211, and asparagine 252. Aspartate 280 is an active-site residue. Residues asparagine 315, asparagine 322, asparagine 354, asparagine 387, asparagine 442, asparagine 523, asparagine 542, asparagine 564, asparagine 658, asparagine 690, and asparagine 712 are each glycosylated (N-linked (GlcNAc...) asparagine). Residues 719 to 753 (SSGDASYGQDSSDYLPEGATDGSAQPILPAGGGPG) are disordered.

The protein belongs to the glycosyl hydrolase 3 family.

It is found in the secreted. The catalysed reaction is Hydrolysis of terminal, non-reducing beta-D-glucosyl residues with release of beta-D-glucose.. Its pathway is glycan metabolism; cellulose degradation. In terms of biological role, beta-glucosidases are one of a number of cellulolytic enzymes involved in the degradation of cellulosic biomass. Catalyzes the last step releasing glucose from the inhibitory cellobiose. This chain is Beta-glucosidase A (bglA), found in Aspergillus kawachii (strain NBRC 4308) (White koji mold).